Reading from the N-terminus, the 222-residue chain is Urease accessory protein UreF (222 aa).

This sequence belongs to the UreF family. As to quaternary structure, ureD, UreF and UreG form a complex that acts as a GTP-hydrolysis-dependent molecular chaperone, activating the urease apoprotein by helping to assemble the nickel containing metallocenter of UreC. The UreE protein probably delivers the nickel.

The protein localises to the cytoplasm. Its function is as follows. Required for maturation of urease via the functional incorporation of the urease nickel metallocenter. This chain is Urease accessory protein UreF, found in Roseobacter denitrificans (strain ATCC 33942 / OCh 114) (Erythrobacter sp. (strain OCh 114)).